The following is a 190-amino-acid chain: Protein GrpE (190 aa).

Residues 1 to 42 (MNEKDNQTTSEPENEQEIIDVNDSGEQPEENETEQPQEEAVE) form a disordered region. Residues 26–42 (EQPEENETEQPQEEAVE) are compositionally biased toward acidic residues.

This sequence belongs to the GrpE family. Homodimer.

It is found in the cytoplasm. Functionally, participates actively in the response to hyperosmotic and heat shock by preventing the aggregation of stress-denatured proteins, in association with DnaK and GrpE. It is the nucleotide exchange factor for DnaK and may function as a thermosensor. Unfolded proteins bind initially to DnaJ; upon interaction with the DnaJ-bound protein, DnaK hydrolyzes its bound ATP, resulting in the formation of a stable complex. GrpE releases ADP from DnaK; ATP binding to DnaK triggers the release of the substrate protein, thus completing the reaction cycle. Several rounds of ATP-dependent interactions between DnaJ, DnaK and GrpE are required for fully efficient folding. This is Protein GrpE from Oceanobacillus iheyensis (strain DSM 14371 / CIP 107618 / JCM 11309 / KCTC 3954 / HTE831).